The primary structure comprises 132 residues: Phosphoribosyl-AMP cyclohydrolase (132 aa).

D86 lines the Mg(2+) pocket. Residue C87 coordinates Zn(2+). Residues D88 and D90 each coordinate Mg(2+). Zn(2+) is bound by residues C103 and C110.

The protein belongs to the PRA-CH family. Homodimer. Mg(2+) is required as a cofactor. Zn(2+) serves as cofactor.

The protein resides in the cytoplasm. The enzyme catalyses 1-(5-phospho-beta-D-ribosyl)-5'-AMP + H2O = 1-(5-phospho-beta-D-ribosyl)-5-[(5-phospho-beta-D-ribosylamino)methylideneamino]imidazole-4-carboxamide. It participates in amino-acid biosynthesis; L-histidine biosynthesis; L-histidine from 5-phospho-alpha-D-ribose 1-diphosphate: step 3/9. Its function is as follows. Catalyzes the hydrolysis of the adenine ring of phosphoribosyl-AMP. This is Phosphoribosyl-AMP cyclohydrolase from Clavibacter michiganensis subsp. michiganensis (strain NCPPB 382).